The following is a 194-amino-acid chain: dTTP/UTP pyrophosphatase (194 aa).

D73 (proton acceptor) is an active-site residue.

The protein belongs to the Maf family. YhdE subfamily. A divalent metal cation is required as a cofactor.

Its subcellular location is the cytoplasm. The catalysed reaction is dTTP + H2O = dTMP + diphosphate + H(+). It catalyses the reaction UTP + H2O = UMP + diphosphate + H(+). Functionally, nucleoside triphosphate pyrophosphatase that hydrolyzes dTTP and UTP. May have a dual role in cell division arrest and in preventing the incorporation of modified nucleotides into cellular nucleic acids. The polypeptide is dTTP/UTP pyrophosphatase (Clostridium botulinum (strain 657 / Type Ba4)).